A 74-amino-acid polypeptide reads, in one-letter code: Acyl carrier protein (74 aa).

The Carrier domain maps to 1–74 (MFEKVRKIIA…DVVEYIKNNS (74 aa)). Position 34 is an O-(pantetheine 4'-phosphoryl)serine (Ser34).

It belongs to the acyl carrier protein (ACP) family. In terms of processing, 4'-phosphopantetheine is transferred from CoA to a specific serine of apo-ACP by AcpS. This modification is essential for activity because fatty acids are bound in thioester linkage to the sulfhydryl of the prosthetic group.

It is found in the cytoplasm. Its pathway is lipid metabolism; fatty acid biosynthesis. Carrier of the growing fatty acid chain in fatty acid biosynthesis. This Acetivibrio thermocellus (strain ATCC 27405 / DSM 1237 / JCM 9322 / NBRC 103400 / NCIMB 10682 / NRRL B-4536 / VPI 7372) (Clostridium thermocellum) protein is Acyl carrier protein.